The primary structure comprises 140 residues: Small ribosomal subunit protein bS6 (140 aa).

Positions 96–140 are disordered; it reads VTGQSEMLKAEENRSERRERRDRPEHEGADSADSDDSDNSDNADE. A compositionally biased stretch (basic and acidic residues) spans 103-124; it reads LKAEENRSERRERRDRPEHEGA. The segment covering 125–140 has biased composition (acidic residues); it reads DSADSDDSDNSDNADE.

This sequence belongs to the bacterial ribosomal protein bS6 family.

In terms of biological role, binds together with bS18 to 16S ribosomal RNA. This Pseudomonas fluorescens (strain SBW25) protein is Small ribosomal subunit protein bS6.